We begin with the raw amino-acid sequence, 295 residues long: 4-diphosphocytidyl-2-C-methyl-D-erythritol kinase (295 aa).

Lysine 22 is an active-site residue. 106–116 contacts ATP; sequence PAGGGFGGGSS. Aspartate 148 is a catalytic residue.

Belongs to the GHMP kinase family. IspE subfamily.

The enzyme catalyses 4-CDP-2-C-methyl-D-erythritol + ATP = 4-CDP-2-C-methyl-D-erythritol 2-phosphate + ADP + H(+). Its pathway is isoprenoid biosynthesis; isopentenyl diphosphate biosynthesis via DXP pathway; isopentenyl diphosphate from 1-deoxy-D-xylulose 5-phosphate: step 3/6. Its function is as follows. Catalyzes the phosphorylation of the position 2 hydroxy group of 4-diphosphocytidyl-2C-methyl-D-erythritol. The protein is 4-diphosphocytidyl-2-C-methyl-D-erythritol kinase of Xanthomonas axonopodis pv. citri (strain 306).